The primary structure comprises 293 residues: Oxidoreductase R2 (293 aa).

This sequence belongs to the asaB hydroxylase/desaturase family.

Its pathway is secondary metabolite biosynthesis. Oxidoreductase; part of the gene cluster that mediates the biosynthesis of squalestatin S1 (SQS1, also known as zaragozic acid A), a heavily oxidized fungal polyketide that offers potent cholesterol lowering activity by targeting squalene synthase (SS). SQS1 is composed of a 2,8-dioxobicyclic[3.2.1]octane-3,4,5-tricarboxyclic acid core that is connected to two lipophilic polyketide arms. These initial steps feature the priming of an unusual benzoic acid starter unit onto the highly reducing polyketide synthase pks2, followed by oxaloacetate extension and product release to generate a tricarboxylic acid containing product. The phenylalanine ammonia lyase (PAL) M7 and the acyl-CoA ligase M9 are involved in transforming phenylalanine into benzoyl-CoA. The citrate synthase-like protein R3 is involved in connecting the C-alpha-carbons of the hexaketide chain and oxaloacetate to afford the tricarboxylic acid unit. The potential hydrolytic enzymes, M8 and M10, are in close proximity to pks2 and may participate in product release. On the other side, the tetraketide arm is synthesized by a the squalestatin tetraketide synthase pks1 and enzymatically esterified to the core in the last biosynthetic step, by the acetyltransferase M4. The biosynthesis of the tetraketide must involve 3 rounds of chain extension. After the first and second rounds methyl-transfer occurs, and in all rounds of extension the ketoreductase and dehydratase are active. The enoyl reductase and C-MeT of pks1 are not active in the final round of extension. The acetyltransferase M4 appears to have a broad substrate selectivity for its acyl CoA substrate, allowing the in vitro synthesis of novel squalestatins. The biosynthesis of SQS1 requires several oxidative steps likely performed by oxidoreductases M1, R1 and R2. Finally, in support of the identification of the cluster as being responsible for SQS1 production, the cluster contains a gene encoding a putative squalene synthase (SS) R6, suggesting a likely mechanism for self-resistance. The polypeptide is Oxidoreductase R2 (Phoma sp. (strain ATCC 20986 / MF5453)).